The sequence spans 76 residues: Tautomerase PptA (76 aa).

The active-site Proton acceptor; via imino nitrogen is the Pro-2.

It belongs to the 4-oxalocrotonate tautomerase family. PptA subfamily. As to quaternary structure, homodimer.

It localises to the cytoplasm. The chain is Tautomerase PptA from Pectobacterium atrosepticum (strain SCRI 1043 / ATCC BAA-672) (Erwinia carotovora subsp. atroseptica).